Here is a 306-residue protein sequence, read N- to C-terminus: Recombination-associated protein RdgC (306 aa).

It belongs to the RdgC family.

It is found in the cytoplasm. The protein localises to the nucleoid. In terms of biological role, may be involved in recombination. The chain is Recombination-associated protein RdgC from Burkholderia ambifaria (strain MC40-6).